The following is an 86-amino-acid chain: uncharacterized protein (86 aa).

It is found in the mitochondrion. This is an uncharacterized protein from Marchantia polymorpha (Common liverwort).